Consider the following 354-residue polypeptide: Uroporphyrinogen decarboxylase (354 aa).

Substrate contacts are provided by residues 27-31 (RQAGR), aspartate 77, tyrosine 154, threonine 209, and histidine 327.

The protein belongs to the uroporphyrinogen decarboxylase family. In terms of assembly, homodimer.

It localises to the cytoplasm. It carries out the reaction uroporphyrinogen III + 4 H(+) = coproporphyrinogen III + 4 CO2. The protein operates within porphyrin-containing compound metabolism; protoporphyrin-IX biosynthesis; coproporphyrinogen-III from 5-aminolevulinate: step 4/4. Functionally, catalyzes the decarboxylation of four acetate groups of uroporphyrinogen-III to yield coproporphyrinogen-III. The chain is Uroporphyrinogen decarboxylase from Citrobacter koseri (strain ATCC BAA-895 / CDC 4225-83 / SGSC4696).